The sequence spans 378 residues: Transmembrane 6 superfamily member 2 (378 aa).

Helical transmembrane passes span threonine 10 to phenylalanine 30, leucine 34 to leucine 54, proline 63 to leucine 83, isoleucine 110 to alanine 130, leucine 140 to isoleucine 160, proline 170 to phenylalanine 190, leucine 219 to valine 239, methionine 269 to phenylalanine 289, glycine 291 to phenylalanine 311, and threonine 332 to phenylalanine 352. 2 consecutive EXPERA domains span residues tyrosine 61–glycine 186 and alanine 217–alanine 351.

It belongs to the TM6SF family. Highly expressed in the liver at both the mRNA and protein levels.

It is found in the endoplasmic reticulum membrane. The protein resides in the endoplasmic reticulum-Golgi intermediate compartment membrane. Functionally, regulator of liver fat metabolism influencing triglyceride secretion and hepatic lipid droplet content. May function as sterol isomerase. This Mus musculus (Mouse) protein is Transmembrane 6 superfamily member 2 (Tm6sf2).